The sequence spans 125 residues: Probable 4-amino-4-deoxy-L-arabinose-phosphoundecaprenol flippase subunit ArnF (125 aa).

Residues 1–2 (MG) are Cytoplasmic-facing. The helical transmembrane segment at 3 to 23 (VMWGLISVAIASLAQLSLGFA) threads the bilayer. Over 24–33 (MMRLPSIAHP) the chain is Periplasmic. Residues 34 to 54 (LAFISGLGAFNAATLALFAGL) traverse the membrane as a helical segment. Over 55–76 (AGYLVSVFCWQKTLHMLALSKA) the chain is Cytoplasmic. The helical transmembrane segment at 77-97 (YALLSLSYVLVWVASMLLPGL) threads the bilayer. Residues 98-100 (QGA) are Periplasmic-facing. Residues 101–121 (FSLKAMLGVLCIMAGVMLIFL) form a helical membrane-spanning segment. At 122–125 (PARS) the chain is on the cytoplasmic side.

Belongs to the ArnF family. In terms of assembly, heterodimer of ArnE and ArnF.

Its subcellular location is the cell inner membrane. Its pathway is bacterial outer membrane biogenesis; lipopolysaccharide biosynthesis. Functionally, translocates 4-amino-4-deoxy-L-arabinose-phosphoundecaprenol (alpha-L-Ara4N-phosphoundecaprenol) from the cytoplasmic to the periplasmic side of the inner membrane. This chain is Probable 4-amino-4-deoxy-L-arabinose-phosphoundecaprenol flippase subunit ArnF, found in Salmonella paratyphi A (strain ATCC 9150 / SARB42).